A 115-amino-acid polypeptide reads, in one-letter code: Translation initiation factor 1A 2 (115 aa).

The tract at residues 1 to 34 (MANYRSTIRHRNSGSRKSVSGDTHEVTRVRTPQK) is disordered. Residues 22–34 (DTHEVTRVRTPQK) show a composition bias toward basic and acidic residues. The S1-like domain maps to 27–101 (TRVRTPQKDR…SKADVTWKYT (75 aa)).

The protein belongs to the eIF-1A family.

Its function is as follows. Seems to be required for maximal rate of protein biosynthesis. Enhances ribosome dissociation into subunits and stabilizes the binding of the initiator Met-tRNA(I) to 40 S ribosomal subunits. This chain is Translation initiation factor 1A 2, found in Methanosarcina barkeri (strain Fusaro / DSM 804).